A 201-amino-acid polypeptide reads, in one-letter code: Putative lipoprotein LppC (201 aa).

An N-terminal signal peptide occupies residues 1 to 23; the sequence is MTSTLHRTPLATAGLALVVALGG. Cysteine 24 carries N-palmitoyl cysteine lipidation. Residue cysteine 24 is the site of S-diacylglycerol cysteine attachment. 3 prevents bacterial uptake by a human macrophage-like cell line regions span residues 77–96, 97–116, and 117–136; these read GANV…AELA, LVVD…IVTG, and IAPG…GHSV. Positions 122–141 are disordered; that stretch reads GSTADGQTPAGGHSVPNSGG.

It belongs to the UPF0098 family.

It localises to the cell membrane. Its subcellular location is the cell surface. Its function is as follows. Probably involved in bacterial recognition and uptake by its host (human). This chain is Putative lipoprotein LppC, found in Mycobacterium tuberculosis (strain ATCC 25618 / H37Rv).